Reading from the N-terminus, the 349-residue chain is 4-hydroxy-3-methylbut-2-enyl diphosphate reductase (349 aa).

Cysteine 18 serves as a coordination point for [4Fe-4S] cluster. 2 residues coordinate (2E)-4-hydroxy-3-methylbut-2-enyl diphosphate: histidine 47 and histidine 83. Residues histidine 47 and histidine 83 each coordinate dimethylallyl diphosphate. Isopentenyl diphosphate-binding residues include histidine 47 and histidine 83. Residue cysteine 105 coordinates [4Fe-4S] cluster. (2E)-4-hydroxy-3-methylbut-2-enyl diphosphate is bound at residue histidine 133. Histidine 133 serves as a coordination point for dimethylallyl diphosphate. An isopentenyl diphosphate-binding site is contributed by histidine 133. Residue glutamate 135 is the Proton donor of the active site. (2E)-4-hydroxy-3-methylbut-2-enyl diphosphate is bound at residue threonine 174. Cysteine 204 lines the [4Fe-4S] cluster pocket. Residues serine 232, serine 233, asparagine 234, and serine 277 each contribute to the (2E)-4-hydroxy-3-methylbut-2-enyl diphosphate site. Dimethylallyl diphosphate-binding residues include serine 232, serine 233, asparagine 234, and serine 277. Isopentenyl diphosphate-binding residues include serine 232, serine 233, asparagine 234, and serine 277.

This sequence belongs to the IspH family. Requires [4Fe-4S] cluster as cofactor.

It carries out the reaction isopentenyl diphosphate + 2 oxidized [2Fe-2S]-[ferredoxin] + H2O = (2E)-4-hydroxy-3-methylbut-2-enyl diphosphate + 2 reduced [2Fe-2S]-[ferredoxin] + 2 H(+). The enzyme catalyses dimethylallyl diphosphate + 2 oxidized [2Fe-2S]-[ferredoxin] + H2O = (2E)-4-hydroxy-3-methylbut-2-enyl diphosphate + 2 reduced [2Fe-2S]-[ferredoxin] + 2 H(+). It functions in the pathway isoprenoid biosynthesis; dimethylallyl diphosphate biosynthesis; dimethylallyl diphosphate from (2E)-4-hydroxy-3-methylbutenyl diphosphate: step 1/1. The protein operates within isoprenoid biosynthesis; isopentenyl diphosphate biosynthesis via DXP pathway; isopentenyl diphosphate from 1-deoxy-D-xylulose 5-phosphate: step 6/6. In terms of biological role, catalyzes the conversion of 1-hydroxy-2-methyl-2-(E)-butenyl 4-diphosphate (HMBPP) into a mixture of isopentenyl diphosphate (IPP) and dimethylallyl diphosphate (DMAPP). Acts in the terminal step of the DOXP/MEP pathway for isoprenoid precursor biosynthesis. In Bartonella bacilliformis (strain ATCC 35685 / KC583 / Herrer 020/F12,63), this protein is 4-hydroxy-3-methylbut-2-enyl diphosphate reductase.